The chain runs to 2766 residues: PDZ domain-containing protein 2 (2766 aa).

A PDZ 1 domain is found at 85–177; sequence LSFGNIPVFG…GGFIYLIMLR (93 aa). 2 disordered regions span residues 189 to 315 and 419 to 452; these read GNSG…KTGK and MPGS…KLKS. The span at 242 to 254 shows a compositional bias: acidic residues; that stretch reads TADDPNSELENGA. The span at 280 to 296 shows a compositional bias: basic and acidic residues; sequence HLERSEADSEVELRVPK. A PDZ 2 domain is found at 334–419; sequence KMELLKESDG…MVQLVVASKM (86 aa). S517 is modified (phosphoserine). Residues 535–621 form the PDZ 3 domain; sequence IIGLYKEKGK…GLFVLTVRTK (87 aa). Residues 627–636 are compositionally biased toward polar residues; sequence LTPCSTPTHM. Positions 627 to 673 are disordered; that stretch reads LTPCSTPTHMSRSSSPSFNTNSGGTPAGGGQEEGGSSSLGRKAPGPK. Residues 637-650 are compositionally biased toward low complexity; sequence SRSSSPSFNTNSGG. A PDZ 4 domain is found at 679-764; sequence EVTLNKEPRV…GPVRLVIGRH (86 aa). Over residues 783-794 the composition is skewed to polar residues; the sequence is YQESREANSSPG. Disordered stretches follow at residues 783–803 and 834–853; these read YQES…KSPS and AGSE…EDGS. A phosphoserine mark is found at S891 and S895. Disordered stretches follow at residues 915-966, 990-1425, 1456-1531, 1725-1909, 1924-1967, 2015-2070, 2146-2174, 2262-2397, 2424-2450, and 2465-2496; these read NGGS…KQEE, HSIL…PSVL, ISLS…CPGT, DSQG…LPEQ, DTSC…IRQS, ERVP…ASQV, FSSH…AMGG, DRPT…ERRT, QLEI…GHAD, and TRAY…WATP. The segment covering 918–927 has biased composition (acidic residues); the sequence is SDDEDFDGEG. The segment covering 1021-1038 has biased composition (basic and acidic residues); it reads GRKEMSGSRSSPKLEYRV. Polar residues-rich tracts occupy residues 1040–1061, 1126–1137, and 1189–1220; these read TDTQ…SENL, PGDSSVPTNCGP, and SETP…SQGI. 2 stretches are compositionally biased toward low complexity: residues 1379–1393 and 1456–1471; these read SQPP…SHHA and ISLS…SPSS. Residue S1767 is modified to Phosphoserine. The segment covering 1797–1806 has biased composition (basic residues); that stretch reads CSPKLKRLNS. The segment covering 1884–1901 has biased composition (polar residues); sequence LRTSASDTSIRTFTSPLT. Composition is skewed to low complexity over residues 1924–1937 and 1947–1963; these read DTSC…PRSG and SGSA…ALAG. Low complexity-rich tracts occupy residues 2280-2296 and 2305-2321; these read PPIN…GSPS and RSLS…SSLL. Polar residues-rich tracts occupy residues 2322-2347 and 2362-2372; these read PQMT…SNKG and PTSTVSPASPS. Residues 2550-2634 form the PDZ 5 domain; sequence FIVLNKKEGS…HKHALMIIKK (85 aa). The segment at 2635-2667 is disordered; sequence GNDQPGPSFKQEPPSANGKGPFPRRTLPLEPGA. Residues 2678-2763 enclose the PDZ 6 domain; the sequence is CVEVLKTSAG…GPVQLVIRKH (86 aa).

In terms of assembly, interacts with SCN10A, CTNND2 and PKP4. Post-translationally, a secreted form is produced by caspase-mediated proteolytic cleavage. As to expression, expressed in the heart, liver, brain, spleen, lung, kidney, testis and skeletal muscle.

It localises to the nucleus. The protein localises to the cytoplasm. The protein resides in the endoplasmic reticulum. Its subcellular location is the cell junction. It is found in the secreted. This Rattus norvegicus (Rat) protein is PDZ domain-containing protein 2 (Pdzd2).